The chain runs to 215 residues: Probable phosphoglycerate mutase GpmB (215 aa).

Substrate contacts are provided by residues 8-15, 21-22, Arg-58, Arg-60, 82-85, 104-105, and 151-152; these read RHGETQWN, QG, ELNM, RR, and GI. Residue His-9 is the Tele-phosphohistidine intermediate of the active site. Catalysis depends on Glu-82, which acts as the Proton donor/acceptor.

Belongs to the phosphoglycerate mutase family. GpmB subfamily.

It carries out the reaction (2R)-2-phosphoglycerate = (2R)-3-phosphoglycerate. It functions in the pathway carbohydrate degradation; glycolysis; pyruvate from D-glyceraldehyde 3-phosphate: step 3/5. The chain is Probable phosphoglycerate mutase GpmB from Shigella dysenteriae serotype 1 (strain Sd197).